The chain runs to 346 residues: MHESVQNYYGKVLQNSSDLKTSACCDASSMPAWLKPLLSQVHPEVSARYYGCGLVAPALLDGCQVLDLGSGSGRDCYVLAQLVGASGSVLGVDMTAEQLAVANAHLDYHAERFGFANVSFRHGYIEDLASLELADGSFDVIVSNCVINLSPDKDSVLREAYRLLKPGGELYFSDVYADRRLADELRQDEVLYGECLGGALYWNDFEHLARRHGFTDPRLVEDQPISITDSALAEKLGDARFYSATYRLFKLDGLEPACEDYGQAVIYRGSIPGAAHAFVLDKHHRIETGRVFPVCGNTWRMLQDTRFAPHFQFIGDFSRHFGLFEGCGGGLPYDRQAAVTAATSCC.

Belongs to the methyltransferase superfamily. Arsenite methyltransferase family.

The enzyme catalyses arsenic triglutathione + [thioredoxin]-dithiol + S-adenosyl-L-methionine + 2 H2O = methylarsonous acid + [thioredoxin]-disulfide + 3 glutathione + S-adenosyl-L-homocysteine + H(+). It catalyses the reaction arsenic triglutathione + 2 [thioredoxin]-dithiol + 2 S-adenosyl-L-methionine + H2O = dimethylarsinous acid + 2 [thioredoxin]-disulfide + 3 glutathione + 2 S-adenosyl-L-homocysteine + 2 H(+). It carries out the reaction arsenic triglutathione + 3 [thioredoxin]-dithiol + 3 S-adenosyl-L-methionine = trimethylarsine + 3 [thioredoxin]-disulfide + 3 glutathione + 3 S-adenosyl-L-homocysteine + 3 H(+). Its function is as follows. Catalyzes the transfer of a methyl group from AdoMet to arsenite, producing methylated arsenicals. Involved in the conversion of As(III) to dimethylarsenate as the main product in the medium and also produces dimethylarsine and trimethylarsine gases. Reduces the arsenic toxicity in the cell and may contribute to the global arsenic cycling. The chain is Arsenite methyltransferase from Aquipseudomonas alcaligenes (strain ATCC 14909 / DSM 50342 / CCUG 1425 / JCM 20561 / NBRC 14159 / NCIMB 9945 / NCTC 10367 / 1577) (Pseudomonas alcaligenes).